We begin with the raw amino-acid sequence, 173 residues long: Ribulose bisphosphate carboxylase small subunit, chloroplastic 1 (173 aa).

The transit peptide at 1-52 (MMVSTAAVARVRPAQTNMVGAFNGCRSSVAFPATRKANNDLSTLPSSGGRVS) directs the protein to the chloroplast.

The protein belongs to the RuBisCO small chain family. Heterohexadecamer of 8 large and 8 small subunits.

Its subcellular location is the plastid. The protein resides in the chloroplast. Functionally, ruBisCO catalyzes two reactions: the carboxylation of D-ribulose 1,5-bisphosphate, the primary event in carbon dioxide fixation, as well as the oxidative fragmentation of the pentose substrate. Both reactions occur simultaneously and in competition at the same active site. Although the small subunit is not catalytic it is essential for maximal activity. The chain is Ribulose bisphosphate carboxylase small subunit, chloroplastic 1 from Lemna gibba (Swollen duckweed).